We begin with the raw amino-acid sequence, 573 residues long: Isocitrate dehydrogenase kinase/phosphatase (573 aa).

Residues 318 to 324 (APGVRGM) and Lys-339 contribute to the ATP site. Asp-374 is a catalytic residue.

This sequence belongs to the AceK family.

It localises to the cytoplasm. It carries out the reaction L-seryl-[isocitrate dehydrogenase] + ATP = O-phospho-L-seryl-[isocitrate dehydrogenase] + ADP + H(+). Its function is as follows. Bifunctional enzyme which can phosphorylate or dephosphorylate isocitrate dehydrogenase (IDH) on a specific serine residue. This is a regulatory mechanism which enables bacteria to bypass the Krebs cycle via the glyoxylate shunt in response to the source of carbon. When bacteria are grown on glucose, IDH is fully active and unphosphorylated, but when grown on acetate or ethanol, the activity of IDH declines drastically concomitant with its phosphorylation. This is Isocitrate dehydrogenase kinase/phosphatase from Stutzerimonas stutzeri (strain A1501) (Pseudomonas stutzeri).